Reading from the N-terminus, the 345-residue chain is Leucine zipper protein 2 (345 aa).

Residues 1–19 (MKFNAAHYLLPLLPALVLS) form the signal peptide. Positions 16 to 211 (LVLSTRQDYE…QMKAMKETVQ (196 aa)) form a coiled coil. A glycan (N-linked (GlcNAc...) asparagine) is linked at Asn133. Residues 164-192 (LRYGKKDLLFKAQQLTELEQKLAVAKNEL) form a leucine-zipper region. Residues 223–345 (PPLSLMPSNP…GTPAREEKLL (123 aa)) form a disordered region. Positions 261 to 277 (GHHDSSQVQATKEESRR) are enriched in basic and acidic residues. Residues 298–313 (PQSNSTAESELTTQKL) are compositionally biased toward polar residues. Asn301 is a glycosylation site (N-linked (GlcNAc...) asparagine).

Expression found only in the brain and spinal cord.

Its subcellular location is the secreted. This chain is Leucine zipper protein 2 (Luzp2), found in Mus musculus (Mouse).